The primary structure comprises 341 residues: Glyceraldehyde-3-phosphate dehydrogenase 2 (341 aa).

NAD(+) is bound by residues 12–13 (RI), Arg78, and Thr120. Residues 152 to 154 (SCT) and Thr183 each bind D-glyceraldehyde 3-phosphate. Cys153 serves as the catalytic Nucleophile. Asn184 provides a ligand contact to NAD(+). Residues Arg198, 211 to 212 (TG), and Arg234 contribute to the D-glyceraldehyde 3-phosphate site. Asn313 provides a ligand contact to NAD(+).

Belongs to the glyceraldehyde-3-phosphate dehydrogenase family. In terms of assembly, homotetramer.

Its subcellular location is the cytoplasm. It carries out the reaction D-glyceraldehyde 3-phosphate + phosphate + NAD(+) = (2R)-3-phospho-glyceroyl phosphate + NADH + H(+). It participates in carbohydrate degradation; glycolysis; pyruvate from D-glyceraldehyde 3-phosphate: step 1/5. Its function is as follows. Catalyzes the oxidative phosphorylation of glyceraldehyde 3-phosphate (G3P) to 1,3-bisphosphoglycerate (BPG) using the cofactor NAD. The first reaction step involves the formation of a hemiacetal intermediate between G3P and a cysteine residue, and this hemiacetal intermediate is then oxidized to a thioester, with concomitant reduction of NAD to NADH. The reduced NADH is then exchanged with the second NAD, and the thioester is attacked by a nucleophilic inorganic phosphate to produce BPG. The polypeptide is Glyceraldehyde-3-phosphate dehydrogenase 2 (gapA2) (Staphylococcus aureus (strain MRSA252)).